The following is a 29-amino-acid chain: Cyclotide mang-A (29 aa).

The segment at residues 1–29 (GFPTCGETCTLGTCNTPGCTCSWPICTRD) is a cross-link (cyclopeptide (Gly-Asp)). 3 cysteine pairs are disulfide-bonded: C5-C19, C9-C21, and C14-C26.

It belongs to the cyclotide family. Moebius subfamily. Post-translationally, this is a cyclic peptide.

Its function is as follows. Probably participates in a plant defense mechanism. The chain is Cyclotide mang-A from Melicytus angustifolius (Hymenanthera angustifolia).